The following is a 338-amino-acid chain: Lumican (338 aa).

The N-terminal stretch at 1 to 18 (MNVCTFTLVLALVGSVSG) is a signal peptide. Position 19 is a pyrrolidone carboxylic acid (glutamine 19). 4 positions are modified to sulfotyrosine: tyrosine 20, tyrosine 21, tyrosine 23, and tyrosine 30. In terms of domain architecture, LRRNT spans 28 to 66 (FMYGELSPNCAPECNCPHSYPTAMYCDDLKLKSVPMVPP). LRR repeat units follow at residues 67 to 88 (GIKYLYLRNNQIDHIDEKAFEN), 91 to 114 (DLQWLILDHNLLENSKIKGKVFSK), 117 to 137 (QLKKLHINYNNLTESVGPLPK), 138 to 159 (SLQDLQLANNKISKLGSFDGLV), 160 to 181 (NLTFIYLQHNQLKEEAVSASLK), 185 to 205 (SLEYLDLSFNQMSKLPAGLPT), 206 to 227 (SLLTLYLDNNKITNIPDEYFNR), and 230 to 250 (GLQYLRLSHNELADSGVPGNS). Asparagine 88 is a glycosylation site (N-linked (GlcNAc...) (keratan sulfate) asparagine). Asparagine 127 carries an N-linked (GlcNAc...) (keratan sulfate) asparagine glycan. N-linked (GlcNAc...) (keratan sulfate) asparagine glycosylation is present at asparagine 160. An N-linked (GlcNAc...) (keratan sulfate) asparagine glycan is attached at asparagine 252. 2 LRR repeats span residues 255–276 (SLLELDLSYNKLKSIPTVNENL) and 277–296 (ENYYLEVNKLEKFDVKSFCK). Cysteine 295 and cysteine 328 are joined by a disulfide. Residue serine 304 is modified to Phosphoserine. The stretch at 305–326 (KIKHLRLDGNPLTQSSLPPDMY) is one LRR 11 repeat.

The protein belongs to the small leucine-rich proteoglycan (SLRP) family. SLRP class II subfamily. In terms of assembly, binds to laminin. In terms of processing, contains keratan sulfate.

It localises to the secreted. Its subcellular location is the extracellular space. The protein localises to the extracellular matrix. The polypeptide is Lumican (Lum) (Rattus norvegicus (Rat)).